The sequence spans 319 residues: Acetyl-coenzyme A carboxylase carboxyl transferase subunit alpha (319 aa).

A CoA carboxyltransferase C-terminal domain is found at 35-296 (NLDEEVQRLR…KAQLLADLLD (262 aa)).

This sequence belongs to the AccA family. In terms of assembly, acetyl-CoA carboxylase is a heterohexamer composed of biotin carboxyl carrier protein (AccB), biotin carboxylase (AccC) and two subunits each of ACCase subunit alpha (AccA) and ACCase subunit beta (AccD).

The protein resides in the cytoplasm. The catalysed reaction is N(6)-carboxybiotinyl-L-lysyl-[protein] + acetyl-CoA = N(6)-biotinyl-L-lysyl-[protein] + malonyl-CoA. It participates in lipid metabolism; malonyl-CoA biosynthesis; malonyl-CoA from acetyl-CoA: step 1/1. Functionally, component of the acetyl coenzyme A carboxylase (ACC) complex. First, biotin carboxylase catalyzes the carboxylation of biotin on its carrier protein (BCCP) and then the CO(2) group is transferred by the carboxyltransferase to acetyl-CoA to form malonyl-CoA. The polypeptide is Acetyl-coenzyme A carboxylase carboxyl transferase subunit alpha (Pectobacterium atrosepticum (strain SCRI 1043 / ATCC BAA-672) (Erwinia carotovora subsp. atroseptica)).